The chain runs to 218 residues: NADH dehydrogenase [ubiquinone] iron-sulfur protein 7, mitochondrial (218 aa).

Over residues 34–48 (LPALSPSTSPTSYTR) the composition is skewed to low complexity. The tract at residues 34-61 (LPALSPSTSPTSYTRPGPPSTSPPPPGL) is disordered. Over residues 49 to 60 (PGPPSTSPPPPG) the composition is skewed to pro residues. Cys-93, Cys-94, Cys-158, and Cys-188 together coordinate [4Fe-4S] cluster.

The protein belongs to the complex I 20 kDa subunit family. Complex I is composed of at least 49 different subunits. This is a component of the iron-sulfur (IP) fragment of the enzyme. [4Fe-4S] cluster serves as cofactor.

Its subcellular location is the mitochondrion. The catalysed reaction is a ubiquinone + NADH + 5 H(+)(in) = a ubiquinol + NAD(+) + 4 H(+)(out). Functionally, core subunit of the mitochondrial membrane respiratory chain NADH dehydrogenase (Complex I) that is believed to belong to the minimal assembly required for catalysis. Complex I functions in the transfer of electrons from NADH to the respiratory chain. The immediate electron acceptor for the enzyme is believed to be ubiquinone. The polypeptide is NADH dehydrogenase [ubiquinone] iron-sulfur protein 7, mitochondrial (Arabidopsis thaliana (Mouse-ear cress)).